The primary structure comprises 678 residues: Beta-catenin-like protein hmp-2 (678 aa).

5 ARM repeats span residues 153–192 (RGGP…NLLM), 280–319 (PSNK…RNLS), 320–359 (DSAT…NLTC), 362–403 (TRNK…HCTA), and 409–448 (EEAQ…NSAL).

This sequence belongs to the beta-catenin family. As to quaternary structure, component of a core catenin-cadherin complex consisting of hmr-1, hmp-1 and hmp-2; the complex localizes to adherens junctions. Interacts with hmr-1; the interaction is direct. May interact with hmp-1. Interacts with frk-1. Epidermal cells.

The protein localises to the cell junction. The protein resides in the adherens junction. Required for cell migration during body enclosure and cell shape changes during body elongation. Plays a role in recruitment of the cadherin protein hmr-1 to adherens junctions. In Caenorhabditis elegans, this protein is Beta-catenin-like protein hmp-2 (hmp-2).